A 177-amino-acid chain; its full sequence is Large ribosomal subunit protein uL6 (177 aa).

The protein belongs to the universal ribosomal protein uL6 family. As to quaternary structure, part of the 50S ribosomal subunit.

In terms of biological role, this protein binds to the 23S rRNA, and is important in its secondary structure. It is located near the subunit interface in the base of the L7/L12 stalk, and near the tRNA binding site of the peptidyltransferase center. In Chromobacterium violaceum (strain ATCC 12472 / DSM 30191 / JCM 1249 / CCUG 213 / NBRC 12614 / NCIMB 9131 / NCTC 9757 / MK), this protein is Large ribosomal subunit protein uL6.